The primary structure comprises 163 residues: UPF0587 protein CG4646 (163 aa).

C33, C36, C68, and C71 together coordinate Zn(2+).

Belongs to the UPF0587 family.

The sequence is that of UPF0587 protein CG4646 from Drosophila melanogaster (Fruit fly).